We begin with the raw amino-acid sequence, 95 residues long: Co-chaperonin GroES (95 aa).

It belongs to the GroES chaperonin family. Heptamer of 7 subunits arranged in a ring. Interacts with the chaperonin GroEL.

The protein resides in the cytoplasm. Functionally, together with the chaperonin GroEL, plays an essential role in assisting protein folding. The GroEL-GroES system forms a nano-cage that allows encapsulation of the non-native substrate proteins and provides a physical environment optimized to promote and accelerate protein folding. GroES binds to the apical surface of the GroEL ring, thereby capping the opening of the GroEL channel. The chain is Co-chaperonin GroES from Streptococcus equi subsp. equi (strain 4047).